The chain runs to 185 residues: Photosystem I assembly protein Ycf4 (185 aa).

2 helical membrane-spanning segments follow: residues 24–44 (YIIG…SISS) and 66–86 (IIMG…WYLV).

Belongs to the Ycf4 family.

Its subcellular location is the cellular thylakoid membrane. Its function is as follows. Seems to be required for the assembly of the photosystem I complex. The sequence is that of Photosystem I assembly protein Ycf4 from Prochlorococcus marinus (strain MIT 9301).